The sequence spans 215 residues: Urease accessory protein UreG (215 aa).

24–31 (GPVGSGKT) is a binding site for GTP.

Belongs to the SIMIBI class G3E GTPase family. UreG subfamily. As to quaternary structure, homodimer. UreD, UreF and UreG form a complex that acts as a GTP-hydrolysis-dependent molecular chaperone, activating the urease apoprotein by helping to assemble the nickel containing metallocenter of UreC. The UreE protein probably delivers the nickel.

The protein resides in the cytoplasm. Its function is as follows. Facilitates the functional incorporation of the urease nickel metallocenter. This process requires GTP hydrolysis, probably effectuated by UreG. The chain is Urease accessory protein UreG from Burkholderia cenocepacia (strain HI2424).